The following is a 1186-amino-acid chain: Myelin transcription factor 1-like protein (1186 aa).

Residues 1 to 21 (MEVDTEEKRHRTRSKGVRVPV) form a disordered region. The segment at 22-65 (EPAIQELFSCPTPGCDGSGHVSGKYARHRSVYGCPLAKKRKTQD) adopts a CCHHC-type 1 zinc-finger fold. Cys-31, Cys-36, His-49, and Cys-55 together coordinate Zn(2+). 2 disordered regions span residues 56-175 (PLAK…QMNC) and 220-247 (RTESEMNSNTSNSLEDDSDKNENLGRKS). A compositionally biased stretch (acidic residues) spans 86–169 (SVDECDDSDG…EEEEEEEENE (84 aa)). Phosphoserine is present on Ser-250. Disordered regions lie at residues 342–372 (SETNPQERNPQQNMNIRQHVRPEEDFPGRTP) and 449–513 (REKM…GCDG). Residues 343–357 (ETNPQERNPQQNMNI) are compositionally biased toward polar residues. 3 stretches are compositionally biased toward basic and acidic residues: residues 361-372 (VRPEEDFPGRTP), 449-487 (REKMAMEAGRRDNMRSYEDQSPRQLPGEDRKPKSSDSHV), and 495-505 (DPSRTEKKESK). 2 consecutive CCHHC-type zinc fingers follow at residues 497 to 540 (SRTE…PPEI) and 541 to 584 (LAMH…KLAK). Cys-506, Cys-511, His-524, Cys-530, Cys-550, Cys-555, His-568, and Cys-574 together coordinate Zn(2+). Disordered regions lie at residues 659 to 709 (RAIA…GGGS) and 753 to 780 (KPQDLCATRNPDMEVDENGTLDLSMNKQ). Positions 666-683 (QTRDISPKGYDDAKRYCK) are enriched in basic and acidic residues. The segment covering 685-709 (PSPSSSSTSSYAPSSSSNLSCGGGS) has biased composition (low complexity). CCHHC-type zinc fingers lie at residues 896-939 (LATS…GIRI), 945-988 (DKED…QKDG), and 998-1041 (KSVK…MKKA). Zn(2+)-binding residues include Cys-905, Cys-910, His-923, Cys-929, Cys-954, Cys-959, His-972, Cys-978, Cys-1007, Cys-1012, His-1025, and Cys-1031. The stretch at 1056-1130 (SNGIENDEEI…LANLSQSLIH (75 aa)) forms a coiled coil.

The protein belongs to the MYT1 family. Interacts with SIN3B.

It localises to the nucleus. It is found in the chromosome. In terms of biological role, transcription factor that plays a key role in neuronal differentiation by specifically repressing expression of non-neuronal genes during neuron differentiation. In contrast to other transcription repressors that inhibit specific lineages, mediates repression of multiple differentiation programs. Also represses expression of negative regulators of neurogenesis, such as members of the Notch signaling pathway, including HES1. The combination of three transcription factors, ASCL1, POU3F2/BRN2 and MYT1L, is sufficient to reprogram fibroblasts and other somatic cells into induced neuronal (iN) cells in vitro. Directly binds the 5'-AAGTT-3' core motif present on the promoter of target genes and represses transcription by recruiting a multiprotein complex containing SIN3B. The 5'-AAGTT-3' core motif is absent from the promoter of neural genes. This is Myelin transcription factor 1-like protein from Homo sapiens (Human).